The sequence spans 647 residues: RalBP1-associated Eps domain-containing protein 2 (647 aa).

In terms of domain architecture, EH 1 spans 21–122 (EQQCYSELFA…RTESIKCELP (102 aa)). The segment at 156-233 (EKNSFKRMDN…PSSEGPGAKP (78 aa)) is disordered. Positions 158–170 (NSFKRMDNEDKQE) are enriched in basic and acidic residues. Residues 221-230 (PEGPSSEGPG) show a composition bias toward low complexity. Serine 239 bears the Phosphoserine mark. In terms of domain architecture, EH 2 spans 268-359 (QREYYVNQFR…LQPEYLQAAF (92 aa)). The region spanning 301 to 336 (LSIPELSYIWELSDADCDGALTLSEFCAAFHLIVAR) is the EF-hand domain. Ca(2+)-binding residues include aspartate 314, aspartate 316, aspartate 318, and glutamate 325. The interval 402–478 (PTQDVTTADD…PRPQKTHSRA (77 aa)) is disordered. At threonine 466 the chain carries Phosphothreonine. Serine 480 carries the post-translational modification Phosphoserine. The disordered stretch occupies residues 492–568 (PAANSGLLPP…PENQTTESQE (77 aa)). A compositionally biased stretch (pro residues) spans 499–510 (LPPPPALPPRPC). The interval 501–647 (PPPALPPRPC…LEQLRPVTVL (147 aa)) is interaction with RALBP1. The span at 524–539 (SQLNRAPSQAAESSPT) shows a compositional bias: polar residues. The interaction with ASAP1 stretch occupies residues 548–647 (PPSKPIRRKF…LEQLRPVTVL (100 aa)). Residues 599-640 (IQTAIRKNKEANAVLARLNSELQQQLKEVHQERIALENQLEQ) adopt a coiled-coil conformation.

Interacts with EPN1. Interacts with EPS15 AND EPS15L1. Interacts with RALBP1; can form a ternary complex with activated Ral (RALA or RALB). Interacts with ASAP1; the interaction is direct and this complex can bind paxillin. Also forms a ternary complex with RALBP1 and ASAP1. Interacts with GRB2. Tyrosine-phosphorylated upon stimulation of cells with EGF. Phosphorylation on Tyr-residues induces its association with the EGF receptor probably indirectly through an adapter like GRB2.

It localises to the cytoplasm. Its function is as follows. Involved in ligand-dependent receptor mediated endocytosis of the EGF and insulin receptors as part of the Ral signaling pathway. By controlling growth factor receptors endocytosis may regulate cell survival. Through ASAP1 may regulate cell adhesion and migration. The chain is RalBP1-associated Eps domain-containing protein 2 (Reps2) from Mus musculus (Mouse).